The chain runs to 377 residues: Sodium-dependent organic anion transporter (377 aa).

Residues 1–29 (MRANCSSSSACPANSSEEELPVGLEVHGN) are Extracellular-facing. An N-linked (GlcNAc...) asparagine glycan is attached at Asn-4. Residues 30 to 50 (LELVFTVVSTVMMGLLMFSLG) form a helical membrane-spanning segment. Residues 51 to 67 (CSVEIRKLWSHIRRPWG) are Cytoplasmic-facing. The helical transmembrane segment at 68–88 (IAVGLLCQFGLMPFTAYLLAI) threads the bilayer. Over 89 to 97 (SFSLKPVQA) the chain is Extracellular. The helical transmembrane segment at 98–118 (IAVLIMGCCPGGTISNIFTFW) threads the bilayer. Residues 119–133 (VDGDMDLSISMTTCS) lie on the Cytoplasmic side of the membrane. A helical membrane pass occupies residues 134–154 (TVAALGMMPLCIYLYTWSWSL). Topologically, residues 155 to 159 (QQNLT) are extracellular. A glycan (N-linked (GlcNAc...) asparagine) is linked at Asn-157. Residues 160-180 (IPYQNIGITLVCLTIPVAFGV) traverse the membrane as a helical segment. Over 181 to 195 (YVNYRWPKQSKIILK) the chain is Cytoplasmic. The helical transmembrane segment at 196–216 (IGAVVGGVLLLVVAVAGVVLA) threads the bilayer. At 217-226 (KGSWNSDITL) the chain is on the extracellular side. The helical transmembrane segment at 227–247 (LTISFIFPLIGHVTGFLLALF) threads the bilayer. Over 248–266 (THQSWQRCRTISLETGAQN) the chain is Cytoplasmic. A helical membrane pass occupies residues 267–285 (IQMCITMLQLSFTAEHLVQ). Residues 286-290 (MLSFP) are Extracellular-facing. A helical transmembrane segment spans residues 291–311 (LAYGLFQLIDGFLIVAAYQTY). The Cytoplasmic segment spans residues 312 to 377 (KRRLKNKHGK…EPVGHITSCE (66 aa)).

The protein belongs to the bile acid:sodium symporter (BASS) (TC 2.A.28) family. In terms of processing, glycosylated. As to expression, highly expressed in testis, placenta and pancreas. Moderately expressed in heart, lung and mammary gland. Weakly expressed in brain, colon, kidney, liver, ovary, prostate, small intestine, spleen and thymus.

It localises to the membrane. It catalyses the reaction estrone 3-sulfate(out) + 2 Na(+)(out) = estrone 3-sulfate(in) + 2 Na(+)(in). It carries out the reaction 17beta-estradiol 3-sulfate(out) + 2 Na(+)(out) = 17beta-estradiol 3-sulfate(in) + 2 Na(+)(in). The catalysed reaction is dehydroepiandrosterone 3-sulfate(out) + 2 Na(+)(out) = dehydroepiandrosterone 3-sulfate(in) + 2 Na(+)(in). The enzyme catalyses androst-5-ene-diol 3-sulfate(out) + 2 Na(+)(out) = androst-5-ene-diol 3-sulfate(in) + 2 Na(+)(in). It catalyses the reaction pregnenolone sulfate(out) + 2 Na(+)(out) = pregnenolone sulfate(in) + 2 Na(+)(in). It carries out the reaction taurolithocholate 3-sulfate(out) + 2 Na(+)(out) = taurolithocholate 3-sulfate(in) + 2 Na(+)(in). The catalysed reaction is androsterone 3alpha-sulfate(out) + 2 Na(+)(out) = androsterone 3alpha-sulfate(in) + 2 Na(+)(in). The enzyme catalyses 5alpha-dihydrotestosterone sulfate(out) + 2 Na(+)(out) = 5alpha-dihydrotestosterone sulfate(in) + 2 Na(+)(in). It catalyses the reaction 17beta-estradiol 17-sulfate(out) + 2 Na(+)(out) = 17beta-estradiol 17-sulfate(in) + 2 Na(+)(in). It carries out the reaction 17alpha-hydroxypregnenolone 3-sulfate(out) + 2 Na(+)(out) = 17alpha-hydroxypregnenolone 3-sulfate(in) + 2 Na(+)(in). The catalysed reaction is epiandrosterone 3-sulfate(out) + 2 Na(+)(out) = epiandrosterone 3-sulfate(in) + 2 Na(+)(in). The enzyme catalyses epitestosterone 17-sulfate(out) + 2 Na(+)(out) = epitestosterone 17-sulfate(in) + 2 Na(+)(in). It catalyses the reaction testosterone 17-sulfate(out) + 2 Na(+)(out) = testosterone 17-sulfate(in) + 2 Na(+)(in). It carries out the reaction 16alpha-hydroxydehydroepiandrosterone 3-sulfate(out) + 2 Na(+)(out) = 16alpha-hydroxydehydroepiandrosterone 3-sulfate(in) + 2 Na(+)(in). Its function is as follows. Transports sulfoconjugated steroid hormones from the extracellular compartment into the cytosol in a sodium-dependent manner without hydrolysis. Steroid sulfate hormones are commonly considered to be biologically inactive metabolites, that may be activated by steroid sulfatases into free steroids. May play an important role by delivering sulfoconjugated steroids to specific target cells in reproductive organs. May play a role transporting the estriol precursor 16alpha-hydroxydehydroepiandrosterone 3-sulfate (16a-OH-DHEAS) at the fetal blood vessel endothelium. Can also transport other sulfoconjugated molecules such as taurolithocholic acid-3-sulfate and sulfoconjugated pyrenes. The polypeptide is Sodium-dependent organic anion transporter (SLC10A6) (Homo sapiens (Human)).